A 361-amino-acid chain; its full sequence is D-alanine--D-alanine ligase (361 aa).

An ATP-grasp domain is found at 134–344 (KLLLKSFNIP…FKDLIDNLID (211 aa)). 167–222 (KEVLGYPVIVKPAVLGSSIGINVAYSENQIESCIEEALKYDLTIVIEKFIEAREIE) contacts ATP. 3 residues coordinate Mg(2+): D297, E311, and N313.

This sequence belongs to the D-alanine--D-alanine ligase family. Requires Mg(2+) as cofactor. It depends on Mn(2+) as a cofactor.

It is found in the cytoplasm. The enzyme catalyses 2 D-alanine + ATP = D-alanyl-D-alanine + ADP + phosphate + H(+). Its pathway is cell wall biogenesis; peptidoglycan biosynthesis. Functionally, cell wall formation. The sequence is that of D-alanine--D-alanine ligase from Borreliella afzelii (strain PKo) (Borrelia afzelii).